The primary structure comprises 417 residues: Serine/threonine-protein phosphatase 4 regulatory subunit 2 (417 aa).

Residues 141–417 (KNNSNSLNRM…EVTDDPMEQD (277 aa)) form a disordered region. 2 stretches are compositionally biased toward polar residues: residues 158–170 (NSPN…NING) and 186–196 (APLTTNGLPES). Position 159 is a phosphoserine (Ser-159). Positions 197–213 (TDSKDSELQLSEEKGHS) are enriched in basic and acidic residues. Positions 214–226 (DSSASESEVSLLS) are enriched in low complexity. Ser-226 carries the post-translational modification Phosphoserine. Over residues 243-258 (HEVKRLKFDKEGDVRE) the composition is skewed to basic and acidic residues. Polar residues predominate over residues 259 to 268 (TASQTVSGEV). Residues 283-296 (PDKDRESRTRQHCT) are compositionally biased toward basic and acidic residues. Positions 297–313 (EEEEEEEEEEEEEEEES) are enriched in acidic residues. Over residues 320-329 (MVPERKNQEK) the composition is skewed to basic and acidic residues. A compositionally biased stretch (low complexity) spans 367–376 (SAGASRSGSD). A compositionally biased stretch (polar residues) spans 378–392 (LETQESGGPPSSKTG). Acidic residues predominate over residues 402-417 (ESEEATEVTDDPMEQD).

This sequence belongs to the PPP4R2 family. As to quaternary structure, serine/threonine-protein phosphatase 4 (PP4) occurs in different assemblies of the catalytic and one or more regulatory subunits. Component of the PP4 complexes PPP4C-PPP4R2, PPP4C-PPP4R2-PPP4R3A and PPP4C-PPP4R2-PPP4R3B. The PPP4C-PPP4R2 complex appears to be a tetramer composed of 2 molecules of PPP4C and 2 molecules of PPP4R2. Interacts with DDX20/GEMIN3 and GEMIN4. Interacts with RPA2; this DNA damage-dependent interaction recruits PPP4C leading to RPA2 dephosphorylation.

The protein resides in the cytoplasm. The protein localises to the cytoskeleton. Its subcellular location is the microtubule organizing center. It localises to the centrosome. It is found in the nucleus. Its function is as follows. Regulatory subunit of serine/threonine-protein phosphatase 4 (PP4). May regulate the activity of PPP4C at centrosomal microtubule organizing centers. Its interaction with the SMN complex leads to enhance the temporal localization of snRNPs, suggesting a role of PPP4C in maturation of spliceosomal snRNPs. The PPP4C-PPP4R2-PPP4R3A PP4 complex specifically dephosphorylates H2AX phosphorylated on 'Ser-140' (gamma-H2AX) generated during DNA replication and required for DNA double strand break repair. Mediates RPA2 dephosphorylation by recruiting PPP4C to RPA2 in a DNA damage-dependent manner. RPA2 dephosphorylation is required for the efficient RPA2-mediated recruitment of RAD51 to chromatin following double strand breaks, an essential step for DNA repair. The protein is Serine/threonine-protein phosphatase 4 regulatory subunit 2 (Ppp4r2) of Mus musculus (Mouse).